Here is a 484-residue protein sequence, read N- to C-terminus: Membrane-bound lytic murein transglycosylase F (484 aa).

An N-terminal signal peptide occupies residues 1 to 18 (MKGLLLRIIAAFALVLWA). The segment at 19–267 (IDMVFPWQQM…RIEEKYFNHF (249 aa)) is non-LT domain. An LT domain region spans residues 268–484 (SQFDYVDMRQ…PLTDNQEKQE (217 aa)). The active site involves glutamate 312. The disordered stretch occupies residues 459–484 (ADNKDKPSETDENLPLPLTDNQEKQE).

The protein in the N-terminal section; belongs to the bacterial solute-binding protein 3 family. This sequence in the C-terminal section; belongs to the transglycosylase Slt family.

The protein resides in the cell outer membrane. The enzyme catalyses Exolytic cleavage of the (1-&gt;4)-beta-glycosidic linkage between N-acetylmuramic acid (MurNAc) and N-acetylglucosamine (GlcNAc) residues in peptidoglycan, from either the reducing or the non-reducing ends of the peptidoglycan chains, with concomitant formation of a 1,6-anhydrobond in the MurNAc residue.. Its function is as follows. Murein-degrading enzyme that degrades murein glycan strands and insoluble, high-molecular weight murein sacculi, with the concomitant formation of a 1,6-anhydromuramoyl product. Lytic transglycosylases (LTs) play an integral role in the metabolism of the peptidoglycan (PG) sacculus. Their lytic action creates space within the PG sacculus to allow for its expansion as well as for the insertion of various structures such as secretion systems and flagella. This chain is Membrane-bound lytic murein transglycosylase F, found in Mannheimia succiniciproducens (strain KCTC 0769BP / MBEL55E).